Consider the following 376-residue polypeptide: 2-aminoethylphosphonate--pyruvate transaminase 2 (376 aa).

At Lys194 the chain carries N6-(pyridoxal phosphate)lysine.

It belongs to the class-V pyridoxal-phosphate-dependent aminotransferase family. PhnW subfamily. As to quaternary structure, homodimer. Requires pyridoxal 5'-phosphate as cofactor.

The enzyme catalyses (2-aminoethyl)phosphonate + pyruvate = phosphonoacetaldehyde + L-alanine. Its function is as follows. Involved in phosphonate degradation. The polypeptide is 2-aminoethylphosphonate--pyruvate transaminase 2 (Burkholderia lata (strain ATCC 17760 / DSM 23089 / LMG 22485 / NCIMB 9086 / R18194 / 383)).